The following is a 148-amino-acid chain: Large ribosomal subunit protein bL9 (148 aa).

The protein belongs to the bacterial ribosomal protein bL9 family.

Its function is as follows. Binds to the 23S rRNA. The chain is Large ribosomal subunit protein bL9 from Campylobacter concisus (strain 13826).